Reading from the N-terminus, the 458-residue chain is tRNA modification GTPase MnmE (458 aa).

Arg22, Glu86, and Arg125 together coordinate (6S)-5-formyl-5,6,7,8-tetrahydrofolate. Positions 221–379 constitute a TrmE-type G domain; it reads GIRTVILGRP…LEQTITEMFF (159 aa). Position 231 (Asn231) interacts with K(+). GTP is bound by residues 231 to 236, 250 to 256, and 275 to 278; these read NAGKSS, TEIAGTT, and DTAG. Ser235 serves as a coordination point for Mg(2+). Residues Thr250, Ile252, and Thr255 each coordinate K(+). Thr256 is a Mg(2+) binding site. Lys458 contacts (6S)-5-formyl-5,6,7,8-tetrahydrofolate.

This sequence belongs to the TRAFAC class TrmE-Era-EngA-EngB-Septin-like GTPase superfamily. TrmE GTPase family. As to quaternary structure, homodimer. Heterotetramer of two MnmE and two MnmG subunits. The cofactor is K(+).

Its subcellular location is the cytoplasm. Functionally, exhibits a very high intrinsic GTPase hydrolysis rate. Involved in the addition of a carboxymethylaminomethyl (cmnm) group at the wobble position (U34) of certain tRNAs, forming tRNA-cmnm(5)s(2)U34. The sequence is that of tRNA modification GTPase MnmE from Lachnoclostridium phytofermentans (strain ATCC 700394 / DSM 18823 / ISDg) (Clostridium phytofermentans).